Here is a 79-residue protein sequence, read N- to C-terminus: UPF0291 protein SAV1341 (79 aa).

Residues 56-79 (IDPEGNDVTPEKIKEIQQKRDNKN) form a disordered region. The segment covering 64–79 (TPEKIKEIQQKRDNKN) has biased composition (basic and acidic residues).

Belongs to the UPF0291 family.

The protein localises to the cytoplasm. This is UPF0291 protein SAV1341 from Staphylococcus aureus (strain Mu50 / ATCC 700699).